Reading from the N-terminus, the 206-residue chain is Small ribosomal subunit protein uS4 (206 aa).

The 61-residue stretch at 96 to 156 (SRLDNVVYRM…EKSKNQLRIQ (61 aa)) folds into the S4 RNA-binding domain.

This sequence belongs to the universal ribosomal protein uS4 family. Part of the 30S ribosomal subunit. Contacts protein S5. The interaction surface between S4 and S5 is involved in control of translational fidelity.

Functionally, one of the primary rRNA binding proteins, it binds directly to 16S rRNA where it nucleates assembly of the body of the 30S subunit. In terms of biological role, with S5 and S12 plays an important role in translational accuracy. This chain is Small ribosomal subunit protein uS4, found in Teredinibacter turnerae (strain ATCC 39867 / T7901).